Consider the following 485-residue polypeptide: Alpha-amylase (485 aa).

The signal sequence occupies residues 1 to 18; it reads MFLTSVLILCSLAALSLG. Gln-19 bears the Pyrrolidone carboxylic acid mark. Cys-46 and Cys-102 are joined by a disulfide. Ca(2+) is bound by residues Asn-116, Arg-164, and Asp-173. Cys-152 and Cys-166 are joined by a disulfide. Residue Arg-201 coordinates chloride. Asp-203 functions as the Nucleophile in the catalytic mechanism. Ca(2+) is bound at residue His-207. The Proton donor role is filled by Glu-240. 2 residues coordinate chloride: Asn-303 and Arg-339. Cys-439 and Cys-451 are joined by a disulfide. Residue Asn-448 is glycosylated (N-linked (GlcNAc...) asparagine).

It belongs to the glycosyl hydrolase 13 family. As to quaternary structure, monomer. It depends on Ca(2+) as a cofactor. Requires chloride as cofactor. Expressed in larval and adult gut.

It localises to the secreted. It catalyses the reaction Endohydrolysis of (1-&gt;4)-alpha-D-glucosidic linkages in polysaccharides containing three or more (1-&gt;4)-alpha-linked D-glucose units.. The protein is Alpha-amylase of Phaedon cochleariae (Mustard beetle).